The chain runs to 219 residues: Probable N-acetyltransferase camello (219 aa).

2 consecutive transmembrane segments (helical) span residues 44-64 and 66-86; these read FITFVAFTSVFMGTGSYVLAL and SLVALLAAGWYGLYSEFHGLA. Residues 62-211 enclose the N-acetyltransferase domain; sequence LALTSLVALL…VHQYTSFTVA (150 aa).

The protein belongs to the camello family.

It is found in the golgi apparatus membrane. Its function is as follows. Plays a role in regulation of gastrulation, possibly by controlled reduction of cell adhesion in the periblastopore region which is necessary for optimal cell motility. In Xenopus tropicalis (Western clawed frog), this protein is Probable N-acetyltransferase camello.